Consider the following 121-residue polypeptide: Large ribosomal subunit protein bL12 (121 aa).

Belongs to the bacterial ribosomal protein bL12 family. As to quaternary structure, homodimer. Part of the ribosomal stalk of the 50S ribosomal subunit. Forms a multimeric L10(L12)X complex, where L10 forms an elongated spine to which 2 to 4 L12 dimers bind in a sequential fashion. Binds GTP-bound translation factors.

Its function is as follows. Forms part of the ribosomal stalk which helps the ribosome interact with GTP-bound translation factors. Is thus essential for accurate translation. This is Large ribosomal subunit protein bL12 from Vibrio atlanticus (strain LGP32) (Vibrio splendidus (strain Mel32)).